Here is a 234-residue protein sequence, read N- to C-terminus: Glucosamine-6-phosphate deaminase (234 aa).

Asp62 functions as the Proton acceptor; for enolization step in the catalytic mechanism. Residue Asn128 is the For ring-opening step of the active site. His130 acts as the Proton acceptor; for ring-opening step in catalysis. The For ring-opening step role is filled by Glu135.

This sequence belongs to the glucosamine/galactosamine-6-phosphate isomerase family. NagB subfamily.

The enzyme catalyses alpha-D-glucosamine 6-phosphate + H2O = beta-D-fructose 6-phosphate + NH4(+). It functions in the pathway amino-sugar metabolism; N-acetylneuraminate degradation; D-fructose 6-phosphate from N-acetylneuraminate: step 5/5. Its function is as follows. Catalyzes the reversible isomerization-deamination of glucosamine 6-phosphate (GlcN6P) to form fructose 6-phosphate (Fru6P) and ammonium ion. The chain is Glucosamine-6-phosphate deaminase from Streptococcus equi subsp. equi (strain 4047).